Consider the following 235-residue polypeptide: Ribosomal RNA small subunit methyltransferase G (235 aa).

Residues Gly74, Phe79, 97 to 99 (EAT), 125 to 126 (AE), and Arg144 contribute to the S-adenosyl-L-methionine site.

The protein belongs to the methyltransferase superfamily. RNA methyltransferase RsmG family.

It is found in the cytoplasm. Specifically methylates the N7 position of a guanine in 16S rRNA. The polypeptide is Ribosomal RNA small subunit methyltransferase G (Dehalococcoides mccartyi (strain ATCC BAA-2100 / JCM 16839 / KCTC 5957 / BAV1)).